The sequence spans 65 residues: Weak toxin CM-10 (65 aa).

5 disulfides stabilise this stretch: cysteine 3/cysteine 24, cysteine 6/cysteine 11, cysteine 17/cysteine 42, cysteine 46/cysteine 57, and cysteine 58/cysteine 63.

This sequence belongs to the three-finger toxin family. Ancestral subfamily. Orphan group II sub-subfamily. In terms of tissue distribution, expressed by the venom gland.

It is found in the secreted. Functionally, binds with low affinity to muscular (alpha-1-beta-1-delta-epsilon/CHRNA1-CHRNB1-CHRND-CHRNE) and very low affinity to neuronal (alpha-7/CHRNA7) nicotinic acetylcholine receptor (nAChR). The polypeptide is Weak toxin CM-10 (Naja nivea (Cape cobra)).